The primary structure comprises 166 residues: Lipoprotein signal peptidase (166 aa).

4 helical membrane passes run 9–29, 45–65, 71–91, and 100–120; these read ASGA…FDQL, ALTS…FGFL, WQRW…CFLL, and FSLS…DRLV. Active-site residues include Asp126 and Asp144. Residues 135–155 form a helical membrane-spanning segment; sequence WHFPAFNLADSAITIGAVLLI.

This sequence belongs to the peptidase A8 family.

Its subcellular location is the cell inner membrane. The catalysed reaction is Release of signal peptides from bacterial membrane prolipoproteins. Hydrolyzes -Xaa-Yaa-Zaa-|-(S,diacylglyceryl)Cys-, in which Xaa is hydrophobic (preferably Leu), and Yaa (Ala or Ser) and Zaa (Gly or Ala) have small, neutral side chains.. The protein operates within protein modification; lipoprotein biosynthesis (signal peptide cleavage). This protein specifically catalyzes the removal of signal peptides from prolipoproteins. This Burkholderia multivorans (strain ATCC 17616 / 249) protein is Lipoprotein signal peptidase.